The sequence spans 407 residues: Arginine deiminase (407 aa).

Cys397 acts as the Amidino-cysteine intermediate in catalysis.

It belongs to the arginine deiminase family.

It is found in the cytoplasm. It carries out the reaction L-arginine + H2O = L-citrulline + NH4(+). It functions in the pathway amino-acid degradation; L-arginine degradation via ADI pathway; carbamoyl phosphate from L-arginine: step 1/2. The protein is Arginine deiminase (arcA) of Escherichia coli O6:H1 (strain CFT073 / ATCC 700928 / UPEC).